A 541-amino-acid chain; its full sequence is Putative acyl-CoA dehydrogenase AidB (541 aa).

Residues 182-191, Thr-185, Ser-191, 216-218, Ser-218, 423-433, and Asn-429 each bind FAD; these read MGMTEKQGGS, FFS, and IWEGSGNIMCL. Residues 445-541 form a dsDNA-binding region; sequence VYDLLSEAFV…LLRATGGVCV (97 aa).

It belongs to the acyl-CoA dehydrogenase family. As to quaternary structure, homotetramer. Dimer of dimers. FAD serves as cofactor.

It is found in the cytoplasm. Functionally, part of the adaptive DNA-repair response to alkylating agents. Could prevent alkylation damage by protecting DNA and destroying alkylating agents that have yet to reach their DNA target. Binds to double-stranded DNA with a preference for a DNA region that includes its own promoter. Shows weak isovaleryl-CoA dehydrogenase activity in vitro. This chain is Putative acyl-CoA dehydrogenase AidB (aidB), found in Escherichia coli (strain K12).